A 200-amino-acid chain; its full sequence is Nucleoside triphosphate pyrophosphatase (200 aa).

The Proton acceptor role is filled by Asp-79.

It belongs to the Maf family. Requires a divalent metal cation as cofactor.

It localises to the cytoplasm. The enzyme catalyses a ribonucleoside 5'-triphosphate + H2O = a ribonucleoside 5'-phosphate + diphosphate + H(+). The catalysed reaction is a 2'-deoxyribonucleoside 5'-triphosphate + H2O = a 2'-deoxyribonucleoside 5'-phosphate + diphosphate + H(+). Its function is as follows. Nucleoside triphosphate pyrophosphatase. May have a dual role in cell division arrest and in preventing the incorporation of modified nucleotides into cellular nucleic acids. The chain is Nucleoside triphosphate pyrophosphatase from Legionella pneumophila (strain Corby).